The sequence spans 188 residues: Multiple organellar RNA editing factor 7, mitochondrial (188 aa).

Residues 1-20 constitute a mitochondrion transit peptide; sequence MARIIRRPLNLTAAVRFRLS. The disordered stretch occupies residues 169–188; the sequence is DAKSGVVKKKHRRKRKKKLI. The span at 174-188 shows a compositional bias: basic residues; it reads VVKKKHRRKRKKKLI.

It belongs to the MORF family. Heterodimers with MORF8/RIP1, MORF5/RIP5 and MORF6/RIP6.

The protein localises to the mitochondrion. Involved in organellar RNA editing. Required for the processing of few RNA editing sites in mitochondria. This Arabidopsis thaliana (Mouse-ear cress) protein is Multiple organellar RNA editing factor 7, mitochondrial.